Here is a 245-residue protein sequence, read N- to C-terminus: Folate receptor gamma (245 aa).

An N-terminal signal peptide occupies residues 1-22; sequence MDMAWQMMQLLLLALVTAAGSA. Cystine bridges form between Cys-37–Cys-65, Cys-57–Cys-105, Cys-66–Cys-109, Cys-89–Cys-175, Cys-96–Cys-146, Cys-135–Cys-209, Cys-139–Cys-189, and Cys-152–Cys-169. 2 residues coordinate folate: Asp-103 and Tyr-107. Asn-121 is a glycosylation site (N-linked (GlcNAc...) asparagine). Residues 124-128, 157-162, and Ser-196 contribute to the folate site; these read WRKER and HKGWNW. Residue Asn-161 is glycosylated (N-linked (GlcNAc...) asparagine). Asn-201 is a glycosylation site (N-linked (GlcNAc...) asparagine).

This sequence belongs to the folate receptor family. As to expression, spleen, thymus, bone marrow, ovarian carcinoma, and uterine carcinoma.

It is found in the secreted. In terms of biological role, binds to folate and reduced folic acid derivatives and mediates delivery of 5-methyltetrahydrofolate to the interior of cells. Isoform Short does not bind folate. The polypeptide is Folate receptor gamma (FOLR3) (Homo sapiens (Human)).